The following is a 514-amino-acid chain: Bifunctional purine biosynthesis protein PurH (514 aa).

In terms of domain architecture, MGS-like spans 1–143 (MTRRALISVS…KNHAGVLVLV (143 aa)).

The protein belongs to the PurH family.

It carries out the reaction (6R)-10-formyltetrahydrofolate + 5-amino-1-(5-phospho-beta-D-ribosyl)imidazole-4-carboxamide = 5-formamido-1-(5-phospho-D-ribosyl)imidazole-4-carboxamide + (6S)-5,6,7,8-tetrahydrofolate. It catalyses the reaction IMP + H2O = 5-formamido-1-(5-phospho-D-ribosyl)imidazole-4-carboxamide. It participates in purine metabolism; IMP biosynthesis via de novo pathway; 5-formamido-1-(5-phospho-D-ribosyl)imidazole-4-carboxamide from 5-amino-1-(5-phospho-D-ribosyl)imidazole-4-carboxamide (10-formyl THF route): step 1/1. The protein operates within purine metabolism; IMP biosynthesis via de novo pathway; IMP from 5-formamido-1-(5-phospho-D-ribosyl)imidazole-4-carboxamide: step 1/1. The chain is Bifunctional purine biosynthesis protein PurH from Deinococcus geothermalis (strain DSM 11300 / CIP 105573 / AG-3a).